Reading from the N-terminus, the 310-residue chain is HTH-type transcriptional regulator CbbR (310 aa).

Residues 7-64 (ITLKQLRALVAVAGSASLTGGATRLGLTPPAIHSQIRNLEEAFGVPLLHRPPETGSFT) form the HTH lysR-type domain. A DNA-binding region (H-T-H motif) is located at residues 24 to 43 (LTGGATRLGLTPPAIHSQIR).

Belongs to the LysR transcriptional regulatory family.

In terms of biological role, transcriptional activator for the cbb operon for RuBisCO and other Calvin cycle genes. In Cereibacter sphaeroides (Rhodobacter sphaeroides), this protein is HTH-type transcriptional regulator CbbR (cbbR).